The chain runs to 452 residues: Keratin, type II cytoskeletal 80 (452 aa).

The tract at residues 1 to 82 (MACRSCVVGF…DPAVQQLKNQ (82 aa)) is head. Serine 45 carries the phosphoserine modification. The interval 82–118 (QEKEEMKALNDKFASLIGKVQALEQRNQLLETRWSFL) is coil 1A. Positions 83 to 394 (EKEEMKALND…KLVEGEEGRM (312 aa)) constitute an IF rod domain. The tract at residues 119–135 (QGQDSAIFDLGHLYEEY) is linker 1. Residues 136–227 (QGRLQEELRK…TIYEQELKDL (92 aa)) form a coil 1B region. A linker 12 region spans residues 228 to 251 (AAQVKDVSVTVGMDSRCHIDLSGI). The segment at 252 to 390 (VEEVKAQYDA…ATYRKLVEGE (139 aa)) is coil 2. A tail region spans residues 391-452 (EGRMDSPSAT…YFSQESEVSE (62 aa)). Serine 396 is subject to Phosphoserine. Residues 412–434 (AASRSGLSKAPSRKKKGSKGPVI) are disordered.

Belongs to the intermediate filament family. As to quaternary structure, heterotetramer of two type I and two type II keratins. As to expression, weakly expressed in tongue, but not skin or in any other tissues or organs examined.

This chain is Keratin, type II cytoskeletal 80 (KRT80), found in Homo sapiens (Human).